Reading from the N-terminus, the 429-residue chain is Histidinol dehydrogenase (429 aa).

NAD(+)-binding residues include Tyr131, Gln193, and Asn216. The substrate site is built by Ser239, Gln261, and His264. Zn(2+)-binding residues include Gln261 and His264. Residues Glu327 and His328 each act as proton acceptor in the active site. Residues His328, Asp361, Glu415, and His420 each contribute to the substrate site. Position 361 (Asp361) interacts with Zn(2+). His420 is a Zn(2+) binding site.

The protein belongs to the histidinol dehydrogenase family. It depends on Zn(2+) as a cofactor.

The catalysed reaction is L-histidinol + 2 NAD(+) + H2O = L-histidine + 2 NADH + 3 H(+). It functions in the pathway amino-acid biosynthesis; L-histidine biosynthesis; L-histidine from 5-phospho-alpha-D-ribose 1-diphosphate: step 9/9. Functionally, catalyzes the sequential NAD-dependent oxidations of L-histidinol to L-histidinaldehyde and then to L-histidine. The sequence is that of Histidinol dehydrogenase (hisD) from Methanocaldococcus jannaschii (strain ATCC 43067 / DSM 2661 / JAL-1 / JCM 10045 / NBRC 100440) (Methanococcus jannaschii).